A 220-amino-acid polypeptide reads, in one-letter code: Putative O-methyltransferase Mjls_4009 (220 aa).

Residues Val-47, Glu-69, 71–72, Ser-77, Asp-95, and Val-96 each bind S-adenosyl-L-methionine; that span reads GT. Residue Asp-143 coordinates substrate. Asp-145 is a binding site for S-adenosyl-L-methionine.

The protein belongs to the class I-like SAM-binding methyltransferase superfamily. Cation-dependent O-methyltransferase family.

The chain is Putative O-methyltransferase Mjls_4009 from Mycobacterium sp. (strain JLS).